Here is a 214-residue protein sequence, read N- to C-terminus: GTP cyclohydrolase 1 (214 aa).

3 residues coordinate Zn(2+): C108, H111, and C179.

It belongs to the GTP cyclohydrolase I family. In terms of assembly, toroid-shaped homodecamer, composed of two pentamers of five dimers.

It catalyses the reaction GTP + H2O = 7,8-dihydroneopterin 3'-triphosphate + formate + H(+). It participates in cofactor biosynthesis; 7,8-dihydroneopterin triphosphate biosynthesis; 7,8-dihydroneopterin triphosphate from GTP: step 1/1. The polypeptide is GTP cyclohydrolase 1 (Shewanella putrefaciens (strain CN-32 / ATCC BAA-453)).